Here is a 238-residue protein sequence, read N- to C-terminus: NADH-quinone oxidoreductase subunit C (238 aa).

Positions 1–20 (MSSPDQNPSDAAGQTGSSNE) are disordered.

Belongs to the complex I 30 kDa subunit family. As to quaternary structure, NDH-1 is composed of 14 different subunits. Subunits NuoB, C, D, E, F, and G constitute the peripheral sector of the complex.

The protein resides in the cell membrane. The catalysed reaction is a quinone + NADH + 5 H(+)(in) = a quinol + NAD(+) + 4 H(+)(out). Its function is as follows. NDH-1 shuttles electrons from NADH, via FMN and iron-sulfur (Fe-S) centers, to quinones in the respiratory chain. The immediate electron acceptor for the enzyme in this species is believed to be a menaquinone. Couples the redox reaction to proton translocation (for every two electrons transferred, four hydrogen ions are translocated across the cytoplasmic membrane), and thus conserves the redox energy in a proton gradient. The polypeptide is NADH-quinone oxidoreductase subunit C (Mycobacterium ulcerans (strain Agy99)).